The primary structure comprises 183 residues: Caltractin ICL1f (183 aa).

Low complexity predominate over residues 1-19; sequence MARRGQQPPQQQQQAQPAQ. The interval 1 to 30 is disordered; that stretch reads MARRGQQPPQQQQQAQPAQKNQAGKFNPAE. EF-hand domains are found at residues 39–74, 75–110, 112–147, and 148–183; these read EEVLEIKEAFDLFDTDGTQSIDPKELKAAMTSLGFE, AKNQTIYQMISDLDTDGSGQIDFAEFLKLMTARISE, DSKADIQKVFNLFDSERAGFITLKDLRKVAKELGET, and MDDSELQEMIDRADSDGDTQVTFEDFYNIMTKKTFA. Residues Asp-52, Asp-54, Thr-56, Ser-58, Glu-63, Asp-88, Asp-90, Ser-92, Gln-94, and Glu-99 each contribute to the Ca(2+) site.

Belongs to the centrin family. In terms of assembly, monomer.

It localises to the cytoplasm. It is found in the cytoskeleton. Plays a fundamental role in microtubule organizing center structure and function. Component of the infraciliary lattice (ICL) and the ciliary basal bodies. The polypeptide is Caltractin ICL1f (Icl1f) (Paramecium tetraurelia).